Reading from the N-terminus, the 391-residue chain is Beta sliding clamp (391 aa).

Belongs to the beta sliding clamp family. Forms a ring-shaped head-to-tail homodimer around DNA which binds and tethers DNA polymerases and other proteins to the DNA. The DNA replisome complex has a single clamp-loading complex (3 tau and 1 each of delta, delta', psi and chi subunits) which binds 3 Pol III cores (1 core on the leading strand and 2 on the lagging strand) each with a beta sliding clamp dimer. Additional proteins in the replisome are other copies of gamma, psi and chi, Ssb, DNA helicase and RNA primase.

It is found in the cytoplasm. Its function is as follows. Confers DNA tethering and processivity to DNA polymerases and other proteins. Acts as a clamp, forming a ring around DNA (a reaction catalyzed by the clamp-loading complex) which diffuses in an ATP-independent manner freely and bidirectionally along dsDNA. Initially characterized for its ability to contact the catalytic subunit of DNA polymerase III (Pol III), a complex, multichain enzyme responsible for most of the replicative synthesis in bacteria; Pol III exhibits 3'-5' exonuclease proofreading activity. The beta chain is required for initiation of replication as well as for processivity of DNA replication. The polypeptide is Beta sliding clamp (dnaN) (Synechocystis sp. (strain ATCC 27184 / PCC 6803 / Kazusa)).